The primary structure comprises 804 residues: Leucine--tRNA ligase (804 aa).

Residues 40–51 carry the 'HIGH' region motif; sequence PYPSGQGLHVGH. The 'KMSKS' region signature appears at 576-580; that stretch reads KMSKS. Lys-579 contributes to the ATP binding site.

This sequence belongs to the class-I aminoacyl-tRNA synthetase family.

It localises to the cytoplasm. The catalysed reaction is tRNA(Leu) + L-leucine + ATP = L-leucyl-tRNA(Leu) + AMP + diphosphate. In Enterococcus faecalis (strain ATCC 700802 / V583), this protein is Leucine--tRNA ligase.